Reading from the N-terminus, the 193-residue chain is Orotate phosphoribosyltransferase (193 aa).

117 to 125 (EDVVTTGLS) contacts 5-phospho-alpha-D-ribose 1-diphosphate. The orotate site is built by Thr121 and Arg149.

This sequence belongs to the purine/pyrimidine phosphoribosyltransferase family. PyrE subfamily. Homodimer. Mg(2+) serves as cofactor.

The catalysed reaction is orotidine 5'-phosphate + diphosphate = orotate + 5-phospho-alpha-D-ribose 1-diphosphate. It functions in the pathway pyrimidine metabolism; UMP biosynthesis via de novo pathway; UMP from orotate: step 1/2. Its function is as follows. Catalyzes the transfer of a ribosyl phosphate group from 5-phosphoribose 1-diphosphate to orotate, leading to the formation of orotidine monophosphate (OMP). This is Orotate phosphoribosyltransferase from Erythrobacter litoralis (strain HTCC2594).